The chain runs to 221 residues: Sugar transporter SWEET1 (221 aa).

Helical transmembrane passes span 3–23, 44–63, 68–88, 102–122, 129–149, 160–180, and 186–206; these read AGGV…LGMF, FLPF…YGVL, TLII…LAYL, ATLL…VPDL, LGLF…ADLA, LSFS…IYGF, and YITV…VLFY. The MtN3/slv 1 domain maps to 10 to 94; the sequence is FLSSACVLFT…LAYLHYSPQK (85 aa). A MtN3/slv 2 domain is found at 127–212; the sequence is QQLGLFCSVF…VLFYKYPPEQ (86 aa). The tract at residues 149 to 221 is mediates interaction with TRPV2; the sequence is AKIIQTKSTQ…QDTKYRLLQT (73 aa).

This sequence belongs to the SWEET sugar transporter family. Interacts with TRPV2; the interaction probably occurs intracellularly and depends on TRPV2 N-glycosylation.

The protein localises to the golgi apparatus membrane. It localises to the cell membrane. Functionally, mediates sugar transport across membranes. May stimulate V(D)J recombination by the activation of RAG1. This Rattus norvegicus (Rat) protein is Sugar transporter SWEET1 (Slc50a1).